We begin with the raw amino-acid sequence, 218 residues long: Octanoyltransferase (218 aa).

Residues 32–211 (INTYDEIWFL…KLSQLLNVSI (180 aa)) enclose the BPL/LPL catalytic domain. Residues 75 to 82 (RGGQITYH), 142 to 144 (SLG), and 155 to 157 (GLS) contribute to the substrate site. The active-site Acyl-thioester intermediate is the cysteine 173.

It belongs to the LipB family.

It localises to the cytoplasm. It carries out the reaction octanoyl-[ACP] + L-lysyl-[protein] = N(6)-octanoyl-L-lysyl-[protein] + holo-[ACP] + H(+). Its pathway is protein modification; protein lipoylation via endogenous pathway; protein N(6)-(lipoyl)lysine from octanoyl-[acyl-carrier-protein]: step 1/2. Its function is as follows. Catalyzes the transfer of endogenously produced octanoic acid from octanoyl-acyl-carrier-protein onto the lipoyl domains of lipoate-dependent enzymes. Lipoyl-ACP can also act as a substrate although octanoyl-ACP is likely to be the physiological substrate. The chain is Octanoyltransferase from Buchnera aphidicola subsp. Schizaphis graminum (strain Sg).